A 194-amino-acid polypeptide reads, in one-letter code: Ribonuclease HII (194 aa).

The 191-residue stretch at 3 to 193 (ILTAGVDEAG…VRNLLAQQAL (191 aa)) folds into the RNase H type-2 domain. A divalent metal cation is bound by residues aspartate 9, glutamate 10, and aspartate 101.

The protein belongs to the RNase HII family. It depends on Mn(2+) as a cofactor. The cofactor is Mg(2+).

It is found in the cytoplasm. It catalyses the reaction Endonucleolytic cleavage to 5'-phosphomonoester.. Functionally, endonuclease that specifically degrades the RNA of RNA-DNA hybrids. The polypeptide is Ribonuclease HII (rnhB) (Neisseria meningitidis serogroup B (strain ATCC BAA-335 / MC58)).